The following is a 441-amino-acid chain: MEESKQNYDLTPLIAPNLDRHLVFPIFEFLQERQLYPDEQILKSKIQLLNQTNMVDYAMDIHKSLYHTEDAPQEMVERRTEVVARLKSLEEAAAPLVSFLLNPNAVQELRADKQYNLQMLKERYQIGPDQIEALYQYAKFQFECGNYSGAADYLYQYRTLCSNLERSLSALWGKLASEILMQNWDIALEELNRLKEIIDSKSFSSPLNQVQNRIWLMHWGLYIFFNHDNGRTQIIDLFNQDKYLNAIQTSAPHLLRYLATAFIVNKRRRPQLKEFIKVIQQEHYSYKDPIIEFLACVFVNYDFDGAQKKMKECEEVIVNDPFLGKRVEDGNFSTVPLRDEFLENARLFVFETYCKIHQRIDMGVLAEKLNLNYEEAERWIVNLIRTSKLDAKIDSESGTVIMEPTQPNVHEQLINHTKGLSGRTYKLVNQLLEHTQAQATR.

A PCI domain is found at 223–407 (IFFNHDNGRT…GTVIMEPTQP (185 aa)).

The protein belongs to the eIF-3 subunit E family. In terms of assembly, component of the eukaryotic translation initiation factor 3 (eIF-3) complex (Potential). Binds to the translation initiation factors TIF3F1 and TIF3H1. Associates with the CSN (COP9 signalosome) complex. Interacts directly with CSN1, CSN4, CSN6A, CSN6B, CSN7, CSN8 and TIF3C1. Binds to 40S small ribosomal subunit S9 (RPS9B and RPS9C) via its N-terminal part. Interacts with the 26S proteasome subunit RPN12a via its C-terminal part. Also binds with At1g27930 and At4g30620.

It localises to the cytoplasm. The protein localises to the nucleus. Functionally, component of the eukaryotic translation initiation factor 3 (eIF-3) complex, which is involved in protein synthesis of a specialized repertoire of mRNAs and, together with other initiation factors, stimulates binding of mRNA and methionyl-tRNAi to the 40S ribosome. The eIF-3 complex specifically targets and initiates translation of a subset of mRNAs involved in cell proliferation (Potential). Negatively regulates translation during flower development. The polypeptide is Eukaryotic translation initiation factor 3 subunit E (Arabidopsis thaliana (Mouse-ear cress)).